A 396-amino-acid polypeptide reads, in one-letter code: MAKAKFQRTKPHVNIGTIGHVDHGKTTLTAAITKVLHDKFPDLNETKAFDQIDNAPEERQRGITINIAHVEYQTDKRHYAHVDAPGHADYIKNMITGAAQMDGAILVVAATDGPMPQTREHVLLARQVGVPYILVALNKADAVDDEELLELVEMEVRELLAAQEFDEDAPVVRVSALKALEGDAKWVASVEELMNAVDESIPDPVRETDKPFLMPVEDVFTITGRGTVVTGRVERGVINVNEEVEIVGIRPSTTKTTVTGVEMFRKLLDQGQAGDNVGLLLRGVKREDVERGQVVTKPGTTTPHTEFEGQVYILSKDEGGRHTPFFNNYRPQFYFRTTDVTGVVTLPEGTEMVMPGDNTNISVKLIQPVAMDEGLRFAIREGGRTVGAGRVTKIIK.

The region spanning 10–205 (KPHVNIGTIG…AVDESIPDPV (196 aa)) is the tr-type G domain. Residues 19-26 (GHVDHGKT) form a G1 region. 19 to 26 (GHVDHGKT) serves as a coordination point for GTP. Threonine 26 is a binding site for Mg(2+). A G2 region spans residues 62–66 (GITIN). The G3 stretch occupies residues 83–86 (DAPG). GTP is bound by residues 83–87 (DAPGH) and 138–141 (NKAD). The interval 138–141 (NKAD) is G4. Residues 175–177 (SAL) are G5.

Belongs to the TRAFAC class translation factor GTPase superfamily. Classic translation factor GTPase family. EF-Tu/EF-1A subfamily. Monomer.

It is found in the cytoplasm. The enzyme catalyses GTP + H2O = GDP + phosphate + H(+). In terms of biological role, GTP hydrolase that promotes the GTP-dependent binding of aminoacyl-tRNA to the A-site of ribosomes during protein biosynthesis. The chain is Elongation factor Tu from Mycobacterium bovis (strain ATCC BAA-935 / AF2122/97).